The sequence spans 511 residues: GMP synthase [glutamine-hydrolyzing] (511 aa).

The Glutamine amidotransferase type-1 domain occupies 5 to 195 (DILVLDFGSQ…AKYACNCESV (191 aa)). Cysteine 82 serves as the catalytic Nucleophile. Residues histidine 169 and glutamate 171 contribute to the active site. In terms of domain architecture, GMPS ATP-PPase spans 196–386 (WNMGSFAKTQ…LGLSKEVVYR (191 aa)). 223 to 229 (SGGVDSS) provides a ligand contact to ATP.

Homodimer.

The catalysed reaction is XMP + L-glutamine + ATP + H2O = GMP + L-glutamate + AMP + diphosphate + 2 H(+). It functions in the pathway purine metabolism; GMP biosynthesis; GMP from XMP (L-Gln route): step 1/1. Catalyzes the synthesis of GMP from XMP. The protein is GMP synthase [glutamine-hydrolyzing] of Campylobacter jejuni subsp. jejuni serotype O:23/36 (strain 81-176).